We begin with the raw amino-acid sequence, 205 residues long: UPF0111 protein YkaA (205 aa).

It belongs to the UPF0111 family.

The chain is UPF0111 protein YkaA (ykaA) from Bacillus subtilis (strain 168).